A 476-amino-acid polypeptide reads, in one-letter code: PTS system N-acetylmuramic acid-specific EIIBC component (476 aa).

The 89-residue stretch at 1 to 89 folds into the PTS EIIB type-1 domain; sequence MATIDNAMIH…KASLGDNMSS (89 aa). Cysteine 28 functions as the Phosphocysteine intermediate; for EIIB activity in the catalytic mechanism. A PTS EIIC type-1 domain is found at 116 to 476; sequence AKFATIFTPL…FFATKDVDLS (361 aa). Transmembrane regions (helical) follow at residues 118–138, 160–180, 186–206, 220–240, 265–285, 304–324, 337–357, 371–391, 396–416, and 443–463; these read FATI…LLGL, LIAY…ILIG, AFGG…LGYN, FFGL…AAIV, TLLI…VYLF, VLAG…FVPV, LFPV…ALYF, GAII…VTLP, FITA…IAYL, and VLPA…TGFI.

Its subcellular location is the cell inner membrane. It catalyses the reaction N-acetyl-beta-D-muramate(out) + N(pros)-phospho-L-histidyl-[protein] = N-acetyl-beta-D-muramate 6-phosphate(in) + L-histidyl-[protein]. Its function is as follows. The phosphoenolpyruvate-dependent sugar phosphotransferase system (sugar PTS), a major carbohydrate active transport system, catalyzes the phosphorylation of incoming sugar substrates concomitantly with their translocation across the cell membrane. This system is involved in N-acetylmuramic acid (MurNAc) transport, yielding cytoplasmic MurNAc-6-P. Is also able to take up anhydro-N-acetylmuramic acid (anhMurNAc), but cannot phosphorylate the carbon 6, probably because of the 1,6-anhydro ring. The chain is PTS system N-acetylmuramic acid-specific EIIBC component (murP) from Pasteurella multocida (strain Pm70).